The primary structure comprises 366 residues: Sulfate/thiosulfate import ATP-binding protein CysA 2 (366 aa).

Positions 14–243 (LSVHALCRRF…PASRFVAEFV (230 aa)) constitute an ABC transporter domain. Residue 46 to 53 (GPSGCGKT) participates in ATP binding.

The protein belongs to the ABC transporter superfamily. Sulfate/tungstate importer (TC 3.A.1.6) family. The complex is composed of two ATP-binding proteins (CysA), two transmembrane proteins (CysT and CysW) and a solute-binding protein (CysP).

It is found in the cell inner membrane. It catalyses the reaction sulfate(out) + ATP + H2O = sulfate(in) + ADP + phosphate + H(+). The enzyme catalyses thiosulfate(out) + ATP + H2O = thiosulfate(in) + ADP + phosphate + H(+). Its function is as follows. Part of the ABC transporter complex CysAWTP involved in sulfate/thiosulfate import. Responsible for energy coupling to the transport system. The polypeptide is Sulfate/thiosulfate import ATP-binding protein CysA 2 (Chromobacterium violaceum (strain ATCC 12472 / DSM 30191 / JCM 1249 / CCUG 213 / NBRC 12614 / NCIMB 9131 / NCTC 9757 / MK)).